The sequence spans 121 residues: Protein yippee-like 5 (121 aa).

The Yippee domain occupies 13–110 (RLFSCANCDT…LERALVRESE (98 aa)). C17, C20, C73, and C76 together coordinate Zn(2+). The residue at position 118 (S118) is a Phosphoserine.

Belongs to the yippee family. Identified in the CTLH complex that contains GID4, RANBP9 and/or RANBP10, MKLN1, MAEA, RMND5A (or alternatively its paralog RMND5B), GID8, ARMC8, WDR26 and YPEL5. Within this complex, MAEA, RMND5A (or alternatively its paralog RMND5B), GID8, WDR26, and RANBP9 and/or RANBP10 form the catalytic core, while GID4, MKLN1, ARMC8 and YPEL5 have ancillary roles. Interacts with RANBP9 and RANBP10.

The protein localises to the nucleus. Its subcellular location is the cytoplasm. It localises to the cytoskeleton. It is found in the microtubule organizing center. The protein resides in the centrosome. The protein localises to the spindle pole. Its subcellular location is the midbody. Its function is as follows. Component of the CTLH E3 ubiquitin-protein ligase complex that selectively accepts ubiquitin from UBE2H and mediates ubiquitination and subsequent proteasomal degradation of the transcription factor HBP1. Required for normal cell proliferation. The chain is Protein yippee-like 5 (YPEL5) from Bos taurus (Bovine).